The following is a 71-amino-acid chain: Heat-stable enterotoxin A (71 aa).

The signal sequence occupies residues 1–19 (MKKIVFVLVLMLSSFGAFG). Positions 20–53 (QETVSGQFSDALSTPITAEVYKQACDPPLPPAEV) are excised as a propeptide. 3 disulfide bridges follow: C59–C64, C60–C68, and C63–C71.

This sequence belongs to the heat-stable enterotoxin family.

The protein resides in the secreted. Functionally, toxin which activates the particulate form of guanylate cyclase and increases cyclic GMP levels within the host intestinal epithelial cells. The sequence is that of Heat-stable enterotoxin A (ystA) from Yersinia enterocolitica.